A 173-amino-acid polypeptide reads, in one-letter code: Transcriptional regulator ERG homolog (173 aa).

Positions 1–84 form a DNA-binding region, ETS; the sequence is SGQIQLWQFL…HGKRYAYKFD (84 aa).

Belongs to the ETS family.

Its subcellular location is the nucleus. In terms of biological role, acts as a transcriptional activator. This is Transcriptional regulator ERG homolog (ERG) from Lytechinus variegatus (Green sea urchin).